The following is a 338-amino-acid chain: Aspartate-semialdehyde dehydrogenase (338 aa).

Residues 13–16 and 41–42 contribute to the NADP(+) site; these read TGAV and RS. R101 contributes to the phosphate binding site. C130 functions as the Acyl-thioester intermediate in the catalytic mechanism. Q157 is a binding site for substrate. Residue 160-161 coordinates NADP(+); it reads SG. K214 serves as a coordination point for phosphate. R236 provides a ligand contact to substrate. The Proton acceptor role is filled by H243. Q316 provides a ligand contact to NADP(+).

The protein belongs to the aspartate-semialdehyde dehydrogenase family. As to quaternary structure, homodimer.

It carries out the reaction L-aspartate 4-semialdehyde + phosphate + NADP(+) = 4-phospho-L-aspartate + NADPH + H(+). The protein operates within amino-acid biosynthesis; L-lysine biosynthesis via DAP pathway; (S)-tetrahydrodipicolinate from L-aspartate: step 2/4. It participates in amino-acid biosynthesis; L-methionine biosynthesis via de novo pathway; L-homoserine from L-aspartate: step 2/3. Its pathway is amino-acid biosynthesis; L-threonine biosynthesis; L-threonine from L-aspartate: step 2/5. Functionally, catalyzes the NADPH-dependent formation of L-aspartate-semialdehyde (L-ASA) by the reductive dephosphorylation of L-aspartyl-4-phosphate. The protein is Aspartate-semialdehyde dehydrogenase (asd) of Synechocystis sp. (strain ATCC 27184 / PCC 6803 / Kazusa).